The chain runs to 477 residues: ETS translocation variant 1 (477 aa).

At Ser-94 the chain carries Phosphoserine. Residues 128-179 (PQVGMRPSNPPTPSSTPVSPLHHASPNSTHTPKPDRAFPAHLPPSQSIPDSS) are disordered. 2 positions are modified to phosphoserine; by RPS6KA1 and RPS6KA5: Ser-191 and Ser-216. Lys-317 participates in a covalent cross-link: Glycyl lysine isopeptide (Lys-Gly) (interchain with G-Cter in SUMO2). Residues 335-415 (LQLWQFLVAL…AGERYVYKFV (81 aa)) constitute a DNA-binding region (ETS).

It belongs to the ETS family. Sumoylated. In terms of processing, phosphorylated at Ser-191 and Ser-216 by RPS6KA1 and RPS6KA5; phosphorylation activates transcriptional activity. In terms of tissue distribution, very highly expressed in brain, highly expressed in testis, lung and heart, moderately in spleen, small intestine, pancreas and colon, weakly in liver, prostate and thymus, very weakly in skeletal muscle, kidney and ovary and not in placenta and peripheral blood leukocytes.

The protein resides in the nucleus. In terms of biological role, transcriptional activator that binds to DNA sequences containing the consensus pentanucleotide 5'-CGGA[AT]-3'. Required for olfactory dopaminergic neuron differentiation; may directly activate expression of tyrosine hydroxylase (TH). This chain is ETS translocation variant 1, found in Homo sapiens (Human).